Reading from the N-terminus, the 396-residue chain is Putative pyridoxal phosphate-dependent acyltransferase (396 aa).

111-112 provides a ligand contact to pyridoxal 5'-phosphate; the sequence is GF. Histidine 136 contributes to the substrate binding site. Residues serine 186, 211 to 214, and 241 to 244 each bind pyridoxal 5'-phosphate; these read DDAH and TLSK. At lysine 244 the chain carries N6-(pyridoxal phosphate)lysine. A substrate-binding site is contributed by threonine 358.

This sequence belongs to the class-II pyridoxal-phosphate-dependent aminotransferase family. In terms of assembly, homodimer. The cofactor is pyridoxal 5'-phosphate.

This Bacillus anthracis protein is Putative pyridoxal phosphate-dependent acyltransferase.